A 558-amino-acid chain; its full sequence is Urocanate hydratase (558 aa).

NAD(+) contacts are provided by residues 54–55 (GG), Gln-132, 178–180 (GMG), Glu-198, 244–245 (NA), 265–269 (QTSAH), 275–276 (YL), and Tyr-324. Residue Cys-412 is part of the active site. Gly-494 lines the NAD(+) pocket.

Belongs to the urocanase family. NAD(+) is required as a cofactor.

The protein resides in the cytoplasm. It catalyses the reaction 4-imidazolone-5-propanoate = trans-urocanate + H2O. It functions in the pathway amino-acid degradation; L-histidine degradation into L-glutamate; N-formimidoyl-L-glutamate from L-histidine: step 2/3. In terms of biological role, catalyzes the conversion of urocanate to 4-imidazolone-5-propionate. The protein is Urocanate hydratase of Acinetobacter baumannii (strain AB307-0294).